The chain runs to 257 residues: Glutamate racemase (257 aa).

Residues 12–13 and 44–45 each bind substrate; these read DS and YG. Cys75 acts as the Proton donor/acceptor in catalysis. 76-77 contacts substrate; the sequence is NT. Cys185 serves as the catalytic Proton donor/acceptor. 186–187 contacts substrate; the sequence is TH.

This sequence belongs to the aspartate/glutamate racemases family.

The catalysed reaction is L-glutamate = D-glutamate. It participates in cell wall biogenesis; peptidoglycan biosynthesis. Provides the (R)-glutamate required for cell wall biosynthesis. This Clostridium botulinum (strain 657 / Type Ba4) protein is Glutamate racemase.